The primary structure comprises 257 residues: uncharacterized protein (257 aa).

Positions 1-22 (MIHSKRLRLWLYLVLLAVFIGA) are cleaved as a signal peptide. A lipid anchor (N-palmitoyl cysteine) is attached at C23. C23 is lipidated: S-diacylglycerol cysteine.

It belongs to the staphylococcal tandem lipoprotein family.

The protein localises to the cell membrane. This is an uncharacterized protein from Staphylococcus aureus (strain NCTC 8325 / PS 47).